Here is an 822-residue protein sequence, read N- to C-terminus: MIVFMRIIHVAQTRRLMIRCNRIRQCGFSVKTAALDLESSDSIIPGLDSHAYGAMLRRCIQKNDPISAKAIHCDILKKGSCLDLFATNILLNAYVKAGFDKDALNLFDEMPERNNVSFVTLAQGYACQDPIGLYSRLHREGHELNPHVFTSFLKLFVSLDKAEICPWLHSPIVKLGYDSNAFVGAALINAYSVCGSVDSARTVFEGILCKDIVVWAGIVSCYVENGYFEDSLKLLSCMRMAGFMPNNYTFDTALKASIGLGAFDFAKGVHGQILKTCYVLDPRVGVGLLQLYTQLGDMSDAFKVFNEMPKNDVVPWSFMIARFCQNGFCNEAVDLFIRMREAFVVPNEFTLSSILNGCAIGKCSGLGEQLHGLVVKVGFDLDIYVSNALIDVYAKCEKMDTAVKLFAELSSKNEVSWNTVIVGYENLGEGGKAFSMFREALRNQVSVTEVTFSSALGACASLASMDLGVQVHGLAIKTNNAKKVAVSNSLIDMYAKCGDIKFAQSVFNEMETIDVASWNALISGYSTHGLGRQALRILDIMKDRDCKPNGLTFLGVLSGCSNAGLIDQGQECFESMIRDHGIEPCLEHYTCMVRLLGRSGQLDKAMKLIEGIPYEPSVMIWRAMLSASMNQNNEEFARRSAEEILKINPKDEATYVLVSNMYAGAKQWANVASIRKSMKEMGVKKEPGLSWIEHQGDVHYFSVGLSDHPDMKLINGMLEWLNMKATRAGYVPDRNAVLLDMDDEEKDKRLWVHSERLALAYGLVRMPSSRNRILIMKNLRICSDCHSAMKVISSIVQRDLVIRDMNRFHHFHAGVCSCGDHW.

The transit peptide at 1-70 (MIVFMRIIHV…QKNDPISAKA (70 aa)) directs the protein to the mitochondrion. 16 PPR repeats span residues 48–82 (DSHAYGAMLRRCIQKNDPISAKAIHCDILKKGSCL), 83–117 (DLFATNILLNAYVKAGFDKDALNLFDEMPERNNVS), 145–179 (NPHVFTSFLKLFVSLDKAEICPWLHSPIVKLGYDS), 180–210 (NAFVGAALINAYSVCGSVDSARTVFEGILCK), 211–245 (DIVVWAGIVSCYVENGYFEDSLKLLSCMRMAGFMP), 246–280 (NNYTFDTALKASIGLGAFDFAKGVHGQILKTCYVL), 281–311 (DPRVGVGLLQLYTQLGDMSDAFKVFNEMPKN), 312–346 (DVVPWSFMIARFCQNGFCNEAVDLFIRMREAFVVP), 347–381 (NEFTLSSILNGCAIGKCSGLGEQLHGLVVKVGFDL), 382–416 (DIYVSNALIDVYAKCEKMDTAVKLFAELSSKNEVS), 417–447 (WNTVIVGYENLGEGGKAFSMFREALRNQVSV), 448–482 (TEVTFSSALGACASLASMDLGVQVHGLAIKTNNAK), 483–513 (KVAVSNSLIDMYAKCGDIKFAQSVFNEMETI), 514–548 (DVASWNALISGYSTHGLGRQALRILDIMKDRDCKP), 549–584 (NGLTFLGVLSGCSNAGLIDQGQECFESMIRDHGIEP), and 585–619 (CLEHYTCMVRLLGRSGQLDKAMKLIEGIPYEPSVM). The segment at 620–695 (IWRAMLSASM…EPGLSWIEHQ (76 aa)) is type E motif. A type E(+) motif region spans residues 696–726 (GDVHYFSVGLSDHPDMKLINGMLEWLNMKAT). The segment at 727-822 (RAGYVPDRNA…AGVCSCGDHW (96 aa)) is type DYW motif.

This sequence belongs to the PPR family. PCMP-H subfamily.

Its subcellular location is the mitochondrion. In Arabidopsis thaliana (Mouse-ear cress), this protein is Putative pentatricopeptide repeat-containing protein At5g13230, mitochondrial (PCMP-H89).